We begin with the raw amino-acid sequence, 155 residues long: 6,7-dimethyl-8-ribityllumazine synthase (155 aa).

Residues Tyr23, 57–59 (AWE), and 81–83 (CVI) each bind 5-amino-6-(D-ribitylamino)uracil. 86–87 (ET) lines the (2S)-2-hydroxy-3-oxobutyl phosphate pocket. The Proton donor role is filled by His89. Phe114 contributes to the 5-amino-6-(D-ribitylamino)uracil binding site. Residue Arg128 coordinates (2S)-2-hydroxy-3-oxobutyl phosphate.

Belongs to the DMRL synthase family.

It carries out the reaction (2S)-2-hydroxy-3-oxobutyl phosphate + 5-amino-6-(D-ribitylamino)uracil = 6,7-dimethyl-8-(1-D-ribityl)lumazine + phosphate + 2 H2O + H(+). It functions in the pathway cofactor biosynthesis; riboflavin biosynthesis; riboflavin from 2-hydroxy-3-oxobutyl phosphate and 5-amino-6-(D-ribitylamino)uracil: step 1/2. Catalyzes the formation of 6,7-dimethyl-8-ribityllumazine by condensation of 5-amino-6-(D-ribitylamino)uracil with 3,4-dihydroxy-2-butanone 4-phosphate. This is the penultimate step in the biosynthesis of riboflavin. This is 6,7-dimethyl-8-ribityllumazine synthase from Rhodopirellula baltica (strain DSM 10527 / NCIMB 13988 / SH1).